A 619-amino-acid polypeptide reads, in one-letter code: Putative transcription activator BRLF1 homolog (619 aa).

2 disordered regions span residues 301-389 (LRDS…ETQS) and 563-603 (GLVS…SDEM). 2 stretches are compositionally biased toward low complexity: residues 371–389 (EAPQAASQTQPTTTQETQS) and 567–582 (QQQAPAPPQNDQGGPP). Residues 589–598 (QEQQQSSTDP) are compositionally biased toward polar residues.

Belongs to the herpesviridae TAF50 family.

Functionally, transcription activation. The sequence is that of Putative transcription activator BRLF1 homolog (50) from Connochaetes taurinus (Blue wildebeest).